The primary structure comprises 205 residues: dITP/XTP pyrophosphatase (205 aa).

8–13 (SGNKGK) is a substrate binding site. Aspartate 69 functions as the Proton acceptor in the catalytic mechanism. Aspartate 69 is a Mg(2+) binding site. Substrate is bound by residues serine 70, 153–156 (HGYD), lysine 176, and 181–182 (HR).

Belongs to the HAM1 NTPase family. In terms of assembly, homodimer. The cofactor is Mg(2+).

It carries out the reaction XTP + H2O = XMP + diphosphate + H(+). It catalyses the reaction dITP + H2O = dIMP + diphosphate + H(+). The catalysed reaction is ITP + H2O = IMP + diphosphate + H(+). Pyrophosphatase that catalyzes the hydrolysis of nucleoside triphosphates to their monophosphate derivatives, with a high preference for the non-canonical purine nucleotides XTP (xanthosine triphosphate), dITP (deoxyinosine triphosphate) and ITP. Seems to function as a house-cleaning enzyme that removes non-canonical purine nucleotides from the nucleotide pool, thus preventing their incorporation into DNA/RNA and avoiding chromosomal lesions. The chain is dITP/XTP pyrophosphatase from Shewanella oneidensis (strain ATCC 700550 / JCM 31522 / CIP 106686 / LMG 19005 / NCIMB 14063 / MR-1).